The sequence spans 1269 residues: DNA-directed RNA polymerase subunit beta (1269 aa).

This sequence belongs to the RNA polymerase beta chain family. The RNAP catalytic core consists of 2 alpha, 1 beta, 1 beta' and 1 omega subunit. When a sigma factor is associated with the core the holoenzyme is formed, which can initiate transcription.

It carries out the reaction RNA(n) + a ribonucleoside 5'-triphosphate = RNA(n+1) + diphosphate. DNA-dependent RNA polymerase catalyzes the transcription of DNA into RNA using the four ribonucleoside triphosphates as substrates. In Porphyromonas gingivalis (strain ATCC 33277 / DSM 20709 / CIP 103683 / JCM 12257 / NCTC 11834 / 2561), this protein is DNA-directed RNA polymerase subunit beta.